The sequence spans 162 residues: NADH-quinone oxidoreductase subunit I (162 aa).

2 4Fe-4S ferredoxin-type domains span residues L52–G82 and T93–N122. Residues C62, C65, C68, C72, C102, C105, C108, and C112 each contribute to the [4Fe-4S] cluster site.

Belongs to the complex I 23 kDa subunit family. In terms of assembly, NDH-1 is composed of 14 different subunits. Subunits NuoA, H, J, K, L, M, N constitute the membrane sector of the complex. The cofactor is [4Fe-4S] cluster.

The protein localises to the cell inner membrane. It catalyses the reaction a quinone + NADH + 5 H(+)(in) = a quinol + NAD(+) + 4 H(+)(out). Functionally, NDH-1 shuttles electrons from NADH, via FMN and iron-sulfur (Fe-S) centers, to quinones in the respiratory chain. The immediate electron acceptor for the enzyme in this species is believed to be ubiquinone. Couples the redox reaction to proton translocation (for every two electrons transferred, four hydrogen ions are translocated across the cytoplasmic membrane), and thus conserves the redox energy in a proton gradient. The chain is NADH-quinone oxidoreductase subunit I from Methylobacterium radiotolerans (strain ATCC 27329 / DSM 1819 / JCM 2831 / NBRC 15690 / NCIMB 10815 / 0-1).